We begin with the raw amino-acid sequence, 86 residues long: Neurotoxin homolog NL1 (86 aa).

Positions 1-21 (MKTLLLTLVVVTMVCMDLGYT) are cleaved as a signal peptide. Cystine bridges form between C24–C45, C38–C62, C66–C78, and C79–C84.

Belongs to the three-finger toxin family. Short-chain subfamily. Orphan group VIII (haditoxin) sub-subfamily. Homodimer; non-covalently linked. Expressed by the venom gland.

It is found in the secreted. Its function is as follows. Antagonist of muscle and neuronal nicotinic acetylcholine receptors (nAChR) with highest affinity for neuronal alpha-7/CHRNA7 nAChRs. The polypeptide is Neurotoxin homolog NL1 (Naja atra (Chinese cobra)).